We begin with the raw amino-acid sequence, 282 residues long: 4-diphosphocytidyl-2-C-methyl-D-erythritol kinase (282 aa).

Lysine 13 is a catalytic residue. 96–106 contributes to the ATP binding site; it reads PMGGGIGGGSS. The active site involves aspartate 138.

Belongs to the GHMP kinase family. IspE subfamily.

The catalysed reaction is 4-CDP-2-C-methyl-D-erythritol + ATP = 4-CDP-2-C-methyl-D-erythritol 2-phosphate + ADP + H(+). Its pathway is isoprenoid biosynthesis; isopentenyl diphosphate biosynthesis via DXP pathway; isopentenyl diphosphate from 1-deoxy-D-xylulose 5-phosphate: step 3/6. In terms of biological role, catalyzes the phosphorylation of the position 2 hydroxy group of 4-diphosphocytidyl-2C-methyl-D-erythritol. The chain is 4-diphosphocytidyl-2-C-methyl-D-erythritol kinase from Pseudomonas syringae pv. tomato (strain ATCC BAA-871 / DC3000).